The sequence spans 605 residues: Formin-binding protein 1-like (605 aa).

The 263-residue stretch at 1–263 folds into the F-BAR domain; the sequence is MSWGTELWDQ…AAKSVDERRD (263 aa). Residues 66-258 are a coiled coil; that stretch reads FTSCIAFFNI…EGMILAAKSV (193 aa). The segment at 245–535 is interaction with CDC42; that stretch reads SKCLEGMILA…EFDDEFEDDD (291 aa). Phosphoserine is present on S295. Positions 392-484 form a coiled coil; it reads LEDFSHLPPE…VEGKTGIRGD (93 aa). Residues 397–474 form the REM-1 domain; sequence HLPPEQRRKK…IHKNEAWLSE (78 aa). The segment at 482-538 is disordered; the sequence is RGDRRHSSDINHLVTQGRESPEGSYTDDANQEVRGPPQQHGHHSEFDDEFEDDDPLP. Residues S488, S501, and S505 each carry the phosphoserine modification. Positions 522 to 605 are interaction with DNM1; it reads GHHSEFDDEF…VTLEKSSKGS (84 aa). A compositionally biased stretch (acidic residues) spans 527 to 536; the sequence is FDDEFEDDDP. Positions 538–599 constitute an SH3 domain; it reads PAIGHCKAIY…PTTYIDVTLE (62 aa). The interaction with DNM2 and WASL stretch occupies residues 541–597; sequence GHCKAIYPFDGHNEGTLAMKEGEVLYIIEEDKGDGWTRARRQNGEEGYVPTTYIDVT. The segment at 541–605 is interaction with DAAM1, DIAPH1 and DIAPH2; that stretch reads GHCKAIYPFD…VTLEKSSKGS (65 aa).

Belongs to the FNBP1 family. In terms of assembly, homodimerizes, the dimers can polymerize end-to-end to form filamentous structures. Interacts with GTP-bound CDC42. Interacts with DAAM1, DIAPH1, DIAPH2, DNM1, DNM2 and WASL/N-WASP. Interacts with ATG3. Interacts (via SH3 domain) with ABI1, WASF2, CDC42 and WIPF1.

The protein resides in the cytoplasm. It localises to the cytoskeleton. The protein localises to the cell cortex. Its subcellular location is the cytoplasmic vesicle. It is found in the cell membrane. Functionally, required to coordinate membrane tubulation with reorganization of the actin cytoskeleton during endocytosis. May bind to lipids such as phosphatidylinositol 4,5-bisphosphate and phosphatidylserine and promote membrane invagination and the formation of tubules. Also promotes CDC42-induced actin polymerization by activating the WASL-WASPIP complex, the predominant form of WASL/N-WASP in cells. Actin polymerization may promote the fission of membrane tubules to form endocytic vesicles. Essential for autophagy of intracellular bacterial pathogens. This Mus musculus (Mouse) protein is Formin-binding protein 1-like (Fnbp1l).